Reading from the N-terminus, the 662-residue chain is Transforming growth factor beta activator LRRC32 (662 aa).

The N-terminal stretch at 1–17 is a signal peptide; the sequence is MRPQILLLLALLTLGLA. Over 18 to 625 the chain is Extracellular; that stretch reads AQRQDKVPCK…EDCEKGGLKN (608 aa). The LRRNT domain maps to 21–48; sequence QDKVPCKMVDKKVSCQGLGLLQVPSVLP. LRR repeat units follow at residues 50–73, 74–95, 98–119, 125–145, 150–171, 174–195, 198–219, 220–240, 244–265, and 266–286; these read DTETLDLSGNQLRSILASPLGFYT, ALRHLDLSTNEISFLQPGAFQA, HLEHLSLAHNRLAMATALSAGG, RVTSLDLSGNSLYSGLLERLL, SLHTLSLAENSLTRLTRHTFRD, VLEQLDLHSNVLMDIEDGAFEG, RLTHLNLSRNSLTCISDFSLQQ, LRVLDLSCNSIEAFQTASQPQ, QLTWLDLRENKLLHFPDLAALP, and RLIYLNLSNNLIRLPTGPPQD. N203 carries N-linked (GlcNAc...) asparagine glycosylation. N-linked (GlcNAc...) asparagine glycans are attached at residues N271 and N308. LRR repeat units lie at residues 316–339, 340–361, 364–385, 387–408, 411–432, 444–465, 467–488, 492–513, 515–536, and 537–558; these read QLLNLDLSYNEIELIPDSFLEHLT, SLCFLNLSRNCLRTFEARRSGS, CLMLLDLSHNALETLELGARAL, SLRTLLLQGNALRDLPPYTFAN, SLQRLNLQGNRVSPCGGPDEPG, SLHSLSLVDNEIELLRAGAFLH, PLTELDLSSNPGLEVATGALGG, SLEVLALQGNGLTVLQVDLPCF, CLKRLNLAENRLSHLPAWTQAV, and SLEVLDLRNNSFSLLPGSAMGG. N-linked (GlcNAc...) asparagine glycosylation occurs at N345. The N-linked (GlcNAc...) asparagine glycan is linked to N545. An LRRCT domain is found at 571-620; the sequence is NPLSCCGNGWLAAQLHQGRVDVDATQDLICRFSSQEEVSLSHVRPEDCEK. Residues 626–646 form a helical membrane-spanning segment; that stretch reads INLIIILTFILVSAILLTTLA. At 647–662 the chain is on the cytoplasmic side; sequence TCCCVRRQKFNQQYKA.

It belongs to the LRRC32/LRRC33 family. As to quaternary structure, interacts with TGFB1; associates via disulfide bonds with the Latency-associated peptide chain (LAP) regulatory chain of TGFB1, leading to regulate activation of TGF-beta-1. Interacts with TGFB2. Interacts with TGFB3; associates via disulfide bonds with the Latency-associated peptide chain (LAP) regulatory chain of TGFB3, leading to regulate activation of TGF-beta-3. Interacts with LAPTM4B; decreases TGFB1 production in regulatory T-cells.

The protein resides in the cell membrane. It localises to the cell surface. Functionally, key regulator of transforming growth factor beta (TGFB1, TGFB2 and TGFB3) that controls TGF-beta activation by maintaining it in a latent state during storage in extracellular space. Associates specifically via disulfide bonds with the Latency-associated peptide (LAP), which is the regulatory chain of TGF-beta, and regulates integrin-dependent activation of TGF-beta. Able to outcompete LTBP1 for binding to LAP regulatory chain of TGF-beta. Controls activation of TGF-beta-1 (TGFB1) on the surface of activated regulatory T-cells (Tregs). Required for epithelial fusion during palate development by regulating activation of TGF-beta-3 (TGFB3). The protein is Transforming growth factor beta activator LRRC32 of Pongo abelii (Sumatran orangutan).